The sequence spans 340 residues: Glycerol-3-phosphate dehydrogenase [NAD(P)+] (340 aa).

NADPH is bound by residues Ser11, Trp12, Arg33, and Lys106. Sn-glycerol 3-phosphate contacts are provided by Lys106, Gly137, and Ser139. Ala141 provides a ligand contact to NADPH. The sn-glycerol 3-phosphate site is built by Lys192, Asp245, Ser255, Arg256, and Asn257. Lys192 serves as the catalytic Proton acceptor. Arg256 is a binding site for NADPH. 2 residues coordinate NADPH: Val280 and Glu282.

It belongs to the NAD-dependent glycerol-3-phosphate dehydrogenase family.

The protein resides in the cytoplasm. The catalysed reaction is sn-glycerol 3-phosphate + NAD(+) = dihydroxyacetone phosphate + NADH + H(+). It carries out the reaction sn-glycerol 3-phosphate + NADP(+) = dihydroxyacetone phosphate + NADPH + H(+). The protein operates within membrane lipid metabolism; glycerophospholipid metabolism. Its function is as follows. Catalyzes the reduction of the glycolytic intermediate dihydroxyacetone phosphate (DHAP) to sn-glycerol 3-phosphate (G3P), the key precursor for phospholipid synthesis. The sequence is that of Glycerol-3-phosphate dehydrogenase [NAD(P)+] from Bacillus cereus (strain 03BB102).